Consider the following 207-residue polypeptide: CASP-like protein F16 (207 aa).

Residues 1-30 (MEKSEKGNGVAPATRSPMALMGSSRNENQE) are disordered. Topologically, residues 1 to 37 (MEKSEKGNGVAPATRSPMALMGSSRNENQEVNTSMRT) are cytoplasmic. Residues 38-58 (AETMLRLVPMALGVAALVVML) traverse the membrane as a helical segment. Over 59–79 (KNSQSNDFGSVSYSDLGAFRY) the chain is Extracellular. A helical transmembrane segment spans residues 80–100 (LVHANGICAGYSLLSAIIAAV). At 101–108 (PSPSTMPR) the chain is on the cytoplasmic side. A helical membrane pass occupies residues 109-129 (AWTFFLLDQILTYVILGAAAV). At 130 to 159 (STEVLYLANKGDSAITWSAACGTFAGFCHK) the chain is on the extracellular side. The helical transmembrane segment at 160-180 (ATIAVVITFVAVICYAVLSLV) threads the bilayer. At 181–207 (SSYRLFTKFDAPVNYPSKTIEATVFHG) the chain is on the cytoplasmic side.

It belongs to the Casparian strip membrane proteins (CASP) family. Homodimer and heterodimers.

It is found in the cell membrane. The polypeptide is CASP-like protein F16 (F16) (Gossypium hirsutum (Upland cotton)).